Here is a 523-residue protein sequence, read N- to C-terminus: Monocarboxylate transporter 7 (523 aa).

Over Met-1–Gly-21 the chain is Cytoplasmic. The helical transmembrane segment at Gly-22–Ile-42 threads the bilayer. The Extracellular portion of the chain corresponds to Lys-43–Arg-62. The chain crosses the membrane as a helical span at residues Ile-63–Val-83. Over Leu-84 to Arg-91 the chain is Cytoplasmic. The chain crosses the membrane as a helical span at residues Leu-92–Gln-112. The Extracellular segment spans residues Glu-113–Tyr-118. A helical transmembrane segment spans residues Val-119–Ile-139. At Leu-140–Ser-149 the chain is on the cytoplasmic side. Residues Ile-150 to Ile-170 traverse the membrane as a helical segment. The Extracellular segment spans residues Met-171–Leu-184. A helical transmembrane segment spans residues Phe-185–Ile-205. At Arg-206–Leu-299 the chain is on the cytoplasmic side. Phosphoserine occurs at positions 234, 237, 240, and 247. Residues Phe-300–Ile-320 form a helical membrane-spanning segment. Topologically, residues Ser-321 to Ala-330 are extracellular. Residues Phe-331–Leu-351 form a helical membrane-spanning segment. Residues Asn-352 to Lys-358 lie on the Cytoplasmic side of the membrane. A helical membrane pass occupies residues Ile-359–Ala-379. At Thr-380–Glu-381 the chain is on the extracellular side. The chain crosses the membrane as a helical span at residues Phe-382–Thr-402. At His-403–Gly-423 the chain is on the cytoplasmic side. Residues Val-424 to Val-444 form a helical membrane-spanning segment. Topologically, residues Asp-445–Arg-452 are extracellular. A helical transmembrane segment spans residues Ala-453 to Pro-473. At Cys-474–Val-523 the chain is on the cytoplasmic side.

The protein belongs to the major facilitator superfamily. Monocarboxylate porter (TC 2.A.1.13) family. Forms functional complexes with BSG/CD147 or EMB/GP70 ancillary proteins.

The protein resides in the basolateral cell membrane. The enzyme catalyses taurine(out) = taurine(in). Functionally, monocarboxylate transporter selective for taurine. May associate with BSG/CD147 or EMB/GP70 ancillary proteins to mediate facilitative efflux or influx of taurine across the plasma membrane. The transport is pH- and sodium-independent. Rather low-affinity, is likely effective for taurine transport in tissues where taurine is present at high concentrations. The chain is Monocarboxylate transporter 7 from Homo sapiens (Human).